Here is a 104-residue protein sequence, read N- to C-terminus: DNA-directed RNA polymerase subunit omega (104 aa).

The tract at residues 53–104 (EIESGNVTIHPDPEGKREAVRRRIEEEKRRKEEEEKKIKEQIAKEKEDGEKI) is disordered. Basic and acidic residues predominate over residues 63–104 (PDPEGKREAVRRRIEEEKRRKEEEEKKIKEQIAKEKEDGEKI).

Belongs to the RNA polymerase subunit omega family. The RNAP catalytic core consists of 2 alpha, 1 beta, 1 beta' and 1 omega subunit. When a sigma factor is associated with the core the holoenzyme is formed, which can initiate transcription.

It carries out the reaction RNA(n) + a ribonucleoside 5'-triphosphate = RNA(n+1) + diphosphate. Functionally, promotes RNA polymerase assembly. Latches the N- and C-terminal regions of the beta' subunit thereby facilitating its interaction with the beta and alpha subunits. The polypeptide is DNA-directed RNA polymerase subunit omega (Streptococcus pneumoniae serotype 2 (strain D39 / NCTC 7466)).